We begin with the raw amino-acid sequence, 102 residues long: Thioredoxin (102 aa).

Positions valine 2–glutamine 102 constitute a Thioredoxin domain. Cysteine 30 and cysteine 33 are joined by a disulfide.

It belongs to the thioredoxin family.

In terms of biological role, participates in various redox reactions through the reversible oxidation of its active center dithiol to a disulfide and catalyzes dithiol-disulfide exchange reactions. The sequence is that of Thioredoxin (trxA) from Mycoplasma pneumoniae (strain ATCC 29342 / M129 / Subtype 1) (Mycoplasmoides pneumoniae).